A 123-amino-acid chain; its full sequence is Protein Wnt-3a (123 aa).

The O-palmitoleoyl serine moiety is linked to residue S1. Residues C89 and C104 are joined by a disulfide bond. Residue N90 is glycosylated (N-linked (GlcNAc...) asparagine).

Belongs to the Wnt family. Disulfide bonds have critical and distinct roles in secretion and activity. Loss of each conserved cysteine results in high molecular weight oxidized Wnt oligomers, which are formed through inter-Wnt disulfide bonding. In terms of processing, palmitoleoylation is required for efficient binding to frizzled receptors. Depalmitoleoylation leads to Wnt signaling pathway inhibition.

It localises to the secreted. It is found in the extracellular space. The protein resides in the extracellular matrix. Functionally, ligand for members of the frizzled family of seven transmembrane receptors. Functions in the canonical Wnt signaling pathway that results in activation of transcription factors of the TCF/LEF family. Required for normal embryonic mesoderm development and formation of caudal somites. Required for normal morphogenesis of the developing neural tube. This is Protein Wnt-3a (WNT-3A) from Alopias vulpinus (Common thresher shark).